A 201-amino-acid polypeptide reads, in one-letter code: MAEPGFFNAMLIGALIFGYVLGSIPFGLILTRLAGLGDVRAIGSGNIGATNVLRTGNKKLAAATLILDALKGTAAALIAAHFGQNAAIAAGFGAFIGHLFPVWIGFKGGKGVATYLGVLIGLAWAGALVFAAAWIVTALLTRYSSLSALVASLVVPIALYSRGNQALAALFAIMTVIVFIKHRANIRRLLNGTESKIGAKG.

5 consecutive transmembrane segments (helical) span residues 10–30 (MLIG…GLIL), 60–80 (LAAA…LIAA), 86–106 (AAIA…WIGF), 116–136 (LGVL…AWIV), and 166–186 (ALAA…RANI).

This sequence belongs to the PlsY family. In terms of assembly, probably interacts with PlsX.

It is found in the cell inner membrane. The catalysed reaction is an acyl phosphate + sn-glycerol 3-phosphate = a 1-acyl-sn-glycero-3-phosphate + phosphate. It participates in lipid metabolism; phospholipid metabolism. Functionally, catalyzes the transfer of an acyl group from acyl-phosphate (acyl-PO(4)) to glycerol-3-phosphate (G3P) to form lysophosphatidic acid (LPA). This enzyme utilizes acyl-phosphate as fatty acyl donor, but not acyl-CoA or acyl-ACP. This is Glycerol-3-phosphate acyltransferase from Brucella canis (strain ATCC 23365 / NCTC 10854 / RM-666).